The primary structure comprises 155 residues: Small ribosomal subunit protein uS7c (155 aa).

This sequence belongs to the universal ribosomal protein uS7 family. Part of the 30S ribosomal subunit.

Its subcellular location is the plastid. The protein resides in the chloroplast. In terms of biological role, one of the primary rRNA binding proteins, it binds directly to 16S rRNA where it nucleates assembly of the head domain of the 30S subunit. The polypeptide is Small ribosomal subunit protein uS7c (rps7) (Lactoris fernandeziana).